The sequence spans 377 residues: Probable glucokinase 2 (377 aa).

27–32 (CDVGGS) serves as a coordination point for ATP.

Belongs to the bacterial glucokinase family.

The enzyme catalyses D-glucose + ATP = D-glucose 6-phosphate + ADP + H(+). In Trichomonas vaginalis, this protein is Probable glucokinase 2 (GK2).